Here is a 520-residue protein sequence, read N- to C-terminus: 2-isopropylmalate synthase (520 aa).

The Pyruvate carboxyltransferase domain maps to 12-274 (IRIFDTTLRD…DSAINTPRIV (263 aa)). Residues aspartate 21, histidine 209, histidine 211, and asparagine 245 each contribute to the Mn(2+) site. Residues 396 to 520 (RLASMTISDV…VVAGKTAAVA (125 aa)) are regulatory domain.

Belongs to the alpha-IPM synthase/homocitrate synthase family. LeuA type 1 subfamily. In terms of assembly, homodimer. It depends on Mn(2+) as a cofactor.

Its subcellular location is the cytoplasm. It carries out the reaction 3-methyl-2-oxobutanoate + acetyl-CoA + H2O = (2S)-2-isopropylmalate + CoA + H(+). Its pathway is amino-acid biosynthesis; L-leucine biosynthesis; L-leucine from 3-methyl-2-oxobutanoate: step 1/4. Catalyzes the condensation of the acetyl group of acetyl-CoA with 3-methyl-2-oxobutanoate (2-ketoisovalerate) to form 3-carboxy-3-hydroxy-4-methylpentanoate (2-isopropylmalate). This Xanthomonas axonopodis pv. citri (strain 306) protein is 2-isopropylmalate synthase.